A 655-amino-acid chain; its full sequence is p-hydroxybenzoic acid efflux pump subunit AaeB (655 aa).

The next 11 helical transmembrane spans lie at Phe-13–Leu-33, Trp-38–Pro-58, Leu-69–Ile-89, Leu-93–Val-113, Trp-121–Leu-141, Glu-152–Ile-172, Leu-370–Val-390, Phe-407–Pro-427, Gln-431–Val-451, Leu-455–Met-475, and Phe-482–Leu-502.

This sequence belongs to the aromatic acid exporter ArAE (TC 2.A.85) family.

The protein resides in the cell inner membrane. Its function is as follows. Forms an efflux pump with AaeA. Could function as a metabolic relief valve, allowing to eliminate certain compounds when they accumulate to high levels in the cell. This chain is p-hydroxybenzoic acid efflux pump subunit AaeB, found in Shigella boydii serotype 4 (strain Sb227).